A 434-amino-acid polypeptide reads, in one-letter code: Calcium uptake protein 2, mitochondrial (434 aa).

The transit peptide at 1–22 (MAAAAGSCARVAAWGGKLRRGL) directs the protein to the mitochondrion. Residues 172–207 (KPHSGFHVAFKMLDTDGNEMIEKREFFKLQKIISKQ) enclose the EF-hand 1 domain. The Ca(2+) site is built by D185, D187, N189, M191, E193, and E196. Position 205 is a phosphoserine (S205). The region spanning 227–262 (EPEINTTLQMRFFGKRGQRKLHYKEFRRFMENLQTE) is the EF-hand 2; degenerate domain. The EF-hand 3; degenerate domain maps to 293-328 (TENKDIYWKNVREKLSAGESISLDEFKSFCHFTTHL). The EF-hand 4 domain maps to 362–397 (LSNNILDTVFKIFDLDGDECLSHEEFLGVLKNRMHR). Ca(2+)-binding residues include D375, D377, D379, C381, and E386.

Belongs to the MICU1 family. MICU2 subfamily. As to quaternary structure, heterodimer; disulfide-linked; heterodimerizes with MICU1. Component of the uniplex complex, composed of MCU, EMRE/SMDT1, MICU1 and MICU2 in a 4:4:1:1 stoichiometry.

It is found in the mitochondrion intermembrane space. Its subcellular location is the mitochondrion inner membrane. In terms of biological role, calcium sensor of the mitochondrial calcium uniporter (MCU) channel, which senses calcium level via its EF-hand domains. MICU1 and MICU2 form a disulfide-linked heterodimer that stimulates and inhibits MCU activity, depending on the concentration of calcium. At low calcium levels, MICU1 occludes the pore of the MCU channel, preventing mitochondrial calcium uptake. At higher calcium levels, calcium-binding to MICU1 and MICU2 induces a conformational change that weakens MCU-MICU1 interactions and moves the MICU1-MICU2 heterodimer away from the pore, allowing calcium permeation through the MCU channel. This is Calcium uptake protein 2, mitochondrial from Homo sapiens (Human).